We begin with the raw amino-acid sequence, 387 residues long: MSADRVPTYSVGELNTAIGSLLERGFAPRFLLEATVSRPQVKKGHLWLTLTDGTASISGVVWASRLAQLSYRPTDGDGVTVVGKLNFWAARASITVQALDIRPSLSTVLRQFEQVRQRLEDEGVINPGRQRSLPSQPATLALLTSVPSSALADMLRTGRERWPMTRLLVIPIPVQGAVADQIIKVLNRLAERCEALAVDGLVLARGGGSREDLAVFDDEALCRCLAQFPRPVVTGIGHEDDLTIADLVADHRAATPTAAMVACLPDRDSAKRNLQDRRQRMKDVVGWRIERDRQRLNDRRAFLRQQSPLRRLQQLQDDLNRKRDLLRALSPSRWLQRGLALLSNDAGETLSGVTSIKVGDRVVIQMNDGELDTDVKVVRPSSHQSMS.

The protein belongs to the XseA family. In terms of assembly, heterooligomer composed of large and small subunits.

The protein localises to the cytoplasm. It carries out the reaction Exonucleolytic cleavage in either 5'- to 3'- or 3'- to 5'-direction to yield nucleoside 5'-phosphates.. Its function is as follows. Bidirectionally degrades single-stranded DNA into large acid-insoluble oligonucleotides, which are then degraded further into small acid-soluble oligonucleotides. The chain is Exodeoxyribonuclease 7 large subunit from Synechococcus sp. (strain CC9902).